A 342-amino-acid chain; its full sequence is Ribosomal RNA small subunit methyltransferase H (342 aa).

Residues 36–38 (GGH), Asp-56, Phe-82, Asp-100, and Gln-107 each bind S-adenosyl-L-methionine. The interval 309–342 (ENRESGMGKGHGAAASRFPTPDSRFPTSPNGDAP) is disordered. Residues 333–342 (FPTSPNGDAP) show a composition bias toward polar residues.

The protein belongs to the methyltransferase superfamily. RsmH family.

It is found in the cytoplasm. It catalyses the reaction cytidine(1402) in 16S rRNA + S-adenosyl-L-methionine = N(4)-methylcytidine(1402) in 16S rRNA + S-adenosyl-L-homocysteine + H(+). Specifically methylates the N4 position of cytidine in position 1402 (C1402) of 16S rRNA. This Xanthomonas campestris pv. campestris (strain 8004) protein is Ribosomal RNA small subunit methyltransferase H.